A 145-amino-acid polypeptide reads, in one-letter code: Deoxyuridine 5'-triphosphate nucleotidohydrolase (145 aa).

Residues arginine 64–glycine 66, asparagine 77, threonine 81–aspartate 83, and methionine 91 contribute to the substrate site.

Belongs to the dUTPase family. Requires Mg(2+) as cofactor.

It carries out the reaction dUTP + H2O = dUMP + diphosphate + H(+). Its pathway is pyrimidine metabolism; dUMP biosynthesis; dUMP from dCTP (dUTP route): step 2/2. Functionally, this enzyme is involved in nucleotide metabolism: it produces dUMP, the immediate precursor of thymidine nucleotides and it decreases the intracellular concentration of dUTP so that uracil cannot be incorporated into DNA. The chain is Deoxyuridine 5'-triphosphate nucleotidohydrolase from Leptospira interrogans serogroup Icterohaemorrhagiae serovar copenhageni (strain Fiocruz L1-130).